Reading from the N-terminus, the 889-residue chain is Protein translocase subunit SecA (889 aa).

ATP-binding positions include Q87, 105–109 (GEGKT), and D494. The interval 823–889 (ESLRPEEADL…RMDKDTKGKR (67 aa)) is disordered. Over residues 867 to 889 (PRDDRPMNREERRRMDKDTKGKR) the composition is skewed to basic and acidic residues.

This sequence belongs to the SecA family. As to quaternary structure, monomer and homodimer. Part of the essential Sec protein translocation apparatus which comprises SecA, SecYEG and auxiliary proteins SecDF-YajC and YidC.

Its subcellular location is the cell inner membrane. It is found in the cytoplasm. The enzyme catalyses ATP + H2O + cellular proteinSide 1 = ADP + phosphate + cellular proteinSide 2.. In terms of biological role, part of the Sec protein translocase complex. Interacts with the SecYEG preprotein conducting channel. Has a central role in coupling the hydrolysis of ATP to the transfer of proteins into and across the cell membrane, serving as an ATP-driven molecular motor driving the stepwise translocation of polypeptide chains across the membrane. The polypeptide is Protein translocase subunit SecA (Bdellovibrio bacteriovorus (strain ATCC 15356 / DSM 50701 / NCIMB 9529 / HD100)).